A 143-amino-acid chain; its full sequence is Ribosomal RNA large subunit methyltransferase H (143 aa).

Positions 68 and 95 each coordinate S-adenosyl-L-methionine.

This sequence belongs to the RNA methyltransferase RlmH family. As to quaternary structure, homodimer.

The protein localises to the cytoplasm. The catalysed reaction is pseudouridine(1915) in 23S rRNA + S-adenosyl-L-methionine = N(3)-methylpseudouridine(1915) in 23S rRNA + S-adenosyl-L-homocysteine + H(+). In terms of biological role, specifically methylates the pseudouridine at position 1915 (m3Psi1915) in 23S rRNA. The sequence is that of Ribosomal RNA large subunit methyltransferase H from Mycoplasma mobile (strain ATCC 43663 / 163K / NCTC 11711) (Mesomycoplasma mobile).